The primary structure comprises 278 residues: Large ribosomal subunit protein uL2 (278 aa).

Residues 224-262 (VMNPVDHPLGGGEGRTSGGRHPVTPWGKPTKGFKTRKTR) are disordered.

It belongs to the universal ribosomal protein uL2 family. As to quaternary structure, part of the 50S ribosomal subunit. Forms a bridge to the 30S subunit in the 70S ribosome.

Its function is as follows. One of the primary rRNA binding proteins. Required for association of the 30S and 50S subunits to form the 70S ribosome, for tRNA binding and peptide bond formation. It has been suggested to have peptidyltransferase activity; this is somewhat controversial. Makes several contacts with the 16S rRNA in the 70S ribosome. This Leptospira biflexa serovar Patoc (strain Patoc 1 / Ames) protein is Large ribosomal subunit protein uL2.